Consider the following 457-residue polypeptide: ATP synthase subunit beta (457 aa).

Position 147-154 (147-154) interacts with ATP; the sequence is GGAGVGKT.

It belongs to the ATPase alpha/beta chains family. F-type ATPases have 2 components, CF(1) - the catalytic core - and CF(0) - the membrane proton channel. CF(1) has five subunits: alpha(3), beta(3), gamma(1), delta(1), epsilon(1). CF(0) has three main subunits: a(1), b(2) and c(9-12). The alpha and beta chains form an alternating ring which encloses part of the gamma chain. CF(1) is attached to CF(0) by a central stalk formed by the gamma and epsilon chains, while a peripheral stalk is formed by the delta and b chains.

It localises to the cell inner membrane. It carries out the reaction ATP + H2O + 4 H(+)(in) = ADP + phosphate + 5 H(+)(out). Functionally, produces ATP from ADP in the presence of a proton gradient across the membrane. The catalytic sites are hosted primarily by the beta subunits. This chain is ATP synthase subunit beta, found in Pasteurella multocida (strain Pm70).